We begin with the raw amino-acid sequence, 378 residues long: TelA-like protein SAV1406 (378 aa).

This sequence belongs to the TelA family.

This is TelA-like protein SAV1406 from Staphylococcus aureus (strain Mu50 / ATCC 700699).